The chain runs to 496 residues: Squalene epoxidase ERG1 (496 aa).

Residues 4 to 24 traverse the membrane as a helical segment; that stretch reads VKYDAIIIGAGVIGPTIATAF. FAD contacts are provided by residues 15-16, 35-36, Arg-43, Arg-148, Val-164, Asp-332, and Met-345; these read VI and ER. A run of 2 helical transmembrane segments spans residues 431–451 and 466–486; these read IGLLSGMLPFPMLLFNHFFSV and LGFPLALFEAFEVLFTAIVIF.

Belongs to the squalene monooxygenase family. FAD is required as a cofactor.

The protein resides in the microsome membrane. The protein localises to the endoplasmic reticulum membrane. It carries out the reaction squalene + reduced [NADPH--hemoprotein reductase] + O2 = (S)-2,3-epoxysqualene + oxidized [NADPH--hemoprotein reductase] + H2O + H(+). Its pathway is terpene metabolism; lanosterol biosynthesis; lanosterol from farnesyl diphosphate: step 2/3. Its activity is regulated as follows. Activity is completely abolished by Triton X-100, deoxycholate or Cu(2+), and partially inhibited by thiol reagents, rotenone and antimycin A. The allylamine antimycotic agents naftifine and SF 86-327are potent inhibitors and show apparently non-competitive kinetics with respect to the substrate squalene. Its function is as follows. Squalene epoxidase; part of the third module of ergosterol biosynthesis pathway that includes the late steps of the pathway. Erg1 catalyzes the epoxidation of squalene into 2,3-epoxysqualene. The third module or late pathway involves the ergosterol synthesis itself through consecutive reactions that mainly occur in the endoplasmic reticulum (ER) membrane. Firstly, the squalene synthase ERG9 catalyzes the condensation of 2 farnesyl pyrophosphate moieties to form squalene, which is the precursor of all steroids. Squalene synthase is crucial for balancing the incorporation of farnesyl diphosphate (FPP) into sterol and nonsterol isoprene synthesis. Secondly, the squalene epoxidase ERG1 catalyzes the stereospecific oxidation of squalene to (S)-2,3-epoxysqualene, which is considered to be a rate-limiting enzyme in steroid biosynthesis. Then, the lanosterol synthase ERG7 catalyzes the cyclization of (S)-2,3 oxidosqualene to lanosterol, a reaction that forms the sterol core. In the next steps, lanosterol is transformed to zymosterol through a complex process involving various demethylation, reduction and desaturation reactions. The lanosterol 14-alpha-demethylase ERG11 (also known as CYP51) catalyzes C14-demethylation of lanosterol to produce 4,4'-dimethyl cholesta-8,14,24-triene-3-beta-ol, which is critical for ergosterol biosynthesis. The C-14 reductase ERG24 reduces the C14=C15 double bond of 4,4-dimethyl-cholesta-8,14,24-trienol to produce 4,4-dimethyl-cholesta-8,24-dienol. 4,4-dimethyl-cholesta-8,24-dienol is substrate of the C-4 demethylation complex ERG25-ERG26-ERG27 in which ERG25 catalyzes the three-step monooxygenation required for the demethylation of 4,4-dimethyl and 4alpha-methylsterols, ERG26 catalyzes the oxidative decarboxylation that results in a reduction of the 3-beta-hydroxy group at the C-3 carbon to an oxo group, and ERG27 is responsible for the reduction of the keto group on the C-3. ERG28 has a role as a scaffold to help anchor ERG25, ERG26 and ERG27 to the endoplasmic reticulum and ERG29 regulates the activity of the iron-containing C4-methylsterol oxidase ERG25. Then, the sterol 24-C-methyltransferase ERG6 catalyzes the methyl transfer from S-adenosyl-methionine to the C-24 of zymosterol to form fecosterol. The C-8 sterol isomerase ERG2 catalyzes the reaction which results in unsaturation at C-7 in the B ring of sterols and thus converts fecosterol to episterol. The sterol-C5-desaturase ERG3 then catalyzes the introduction of a C-5 double bond in the B ring to produce 5-dehydroepisterol. The C-22 sterol desaturase ERG5 further converts 5-dehydroepisterol into ergosta-5,7,22,24(28)-tetraen-3beta-ol by forming the C-22(23) double bond in the sterol side chain. Finally, ergosta-5,7,22,24(28)-tetraen-3beta-ol is substrate of the C-24(28) sterol reductase ERG4 to produce ergosterol. This Candida albicans (strain SC5314 / ATCC MYA-2876) (Yeast) protein is Squalene epoxidase ERG1.